The following is a 390-amino-acid chain: S-adenosylmethionine synthase 3 (390 aa).

Residue glutamate 9 participates in Mg(2+) binding. Position 15 (histidine 15) interacts with ATP. Glutamate 43 serves as a coordination point for K(+). L-methionine-binding residues include glutamate 56 and glutamine 99. ATP-binding positions include 167-169 (DGK), 235-238 (SGRF), aspartate 246, 252-253 (RK), alanine 269, lysine 273, and lysine 277. Aspartate 246 is a binding site for L-methionine. L-methionine is bound at residue lysine 277.

The protein belongs to the AdoMet synthase family. As to quaternary structure, homotetramer. Mn(2+) is required as a cofactor. Mg(2+) serves as cofactor. It depends on Co(2+) as a cofactor. Requires K(+) as cofactor. The cofactor is NH4(+). As to expression, mostly expressed in roots, and, to a lower extent, in hypocotyls and cotyledons.

The protein resides in the cytoplasm. The enzyme catalyses L-methionine + ATP + H2O = S-adenosyl-L-methionine + phosphate + diphosphate. It participates in amino-acid biosynthesis; S-adenosyl-L-methionine biosynthesis; S-adenosyl-L-methionine from L-methionine: step 1/1. With respect to regulation, inhibited by products of SAMS reaction (SAM, Pi, PPi), substrate analogs (cycloleucine and ethionine), and alternative nucleotides (GTP, CTP and ADP). Strongly repressed by PPPi. Functionally, catalyzes the formation of S-adenosylmethionine from methionine and ATP. The reaction comprises two steps that are both catalyzed by the same enzyme: formation of S-adenosylmethionine (AdoMet) and triphosphate, and subsequent hydrolysis of the triphosphate. The protein is S-adenosylmethionine synthase 3 (SAMS3) of Catharanthus roseus (Madagascar periwinkle).